The sequence spans 657 residues: Interferon-induced GTP-binding protein Mx1 (657 aa).

Methionine 1 bears the N-acetylmethionine mark. The Dynamin-type G domain occupies 63 to 336 (DLALPAIAVI…LITHICKTLP (274 aa)). The interval 73 to 80 (GDQSSGKS) is G1 motif. 73–80 (GDQSSGKS) is a binding site for GTP. Positions 98-100 (VTR) are G2 motif. Residues 174 to 177 (DLPG) are G3 motif. GTP is bound by residues 174–178 (DLPGI) and 243–246 (TKPD). Residues 243-246 (TKPD) are G4 motif. A G5 motif region spans residues 275-278 (KCRG). The interval 337-362 (LLENQIKENHEKITEELQKYGSDVPE) is bundle signaling element (BSE). Residues 362-529 (EDEHEKMFFL…HFQMEQIVYC (168 aa)) are middle domain. A stalk region spans residues 363–627 (DEHEKMFFLI…KDTYSWLLKE (265 aa)). A compositionally biased stretch (basic and acidic residues) spans 540–551 (RVREKDSDEEKK). A disordered region spans residues 540–559 (RVREKDSDEEKKKKTSSMSH). A critical for lipid-binding region spans residues 550 to 553 (KKKK). One can recognise a GED domain in the interval 569-657 (LSEILEHLLA…ARRRLAKFPG (89 aa)).

The protein belongs to the TRAFAC class dynamin-like GTPase superfamily. Dynamin/Fzo/YdjA family. As to quaternary structure, homooligomer. Oligomerizes into multimeric filamentous or ring-like structures by virtue of its stalk domain. Oligomerization is critical for GTPase activity, protein stability, and recognition of viral target structures. Interacts with TRPC1, TRPC3, TRPC4, TRPC5, TRPC6 and TRPC7. Interacts with HSPA5. Interacts with TUBB/TUBB5. Interacts with DDX39A and DDX39B. In terms of processing, ISGylated.

It localises to the cytoplasm. The protein resides in the endoplasmic reticulum membrane. Its subcellular location is the perinuclear region. Functionally, interferon-induced dynamin-like GTPase with antiviral activity. The protein is Interferon-induced GTP-binding protein Mx1 (MX1) of Canis lupus familiaris (Dog).